A 345-amino-acid polypeptide reads, in one-letter code: MKTFQITRPDETIREALTDKINNLTKPKGSLGTLEELALQIGLIQQTLTPELRHPQNIIFAADHGIVDEGVSLSPKEITWQQISNFLHGGAGVNFLCRQHGFELKIVDAGVDYDLPYEKGIINMKVRKSSRNYLYEAAMTEEEMNLCIERGAEVVRQCHAEGCNVLSLGEMGIGNTSSSSMWMTCFTHIPLELCVGAGSGLDNAGVRHKYNVLQQALDHYQGDGSAHDLIRYFGGLEMVMAIGAMLQAAELKMIILVDGFIMTNCILAASQLYPEVLHYAIFGHQGDEAGHKLVLDAMGAKPLLNLGLRLGEGTGAICSYPIIDSAVRMINEMDNFAHAAITKYF.

Glu-312 (proton acceptor) is an active-site residue.

This sequence belongs to the CobT family.

It carries out the reaction 5,6-dimethylbenzimidazole + nicotinate beta-D-ribonucleotide = alpha-ribazole 5'-phosphate + nicotinate + H(+). It functions in the pathway nucleoside biosynthesis; alpha-ribazole biosynthesis; alpha-ribazole from 5,6-dimethylbenzimidazole: step 1/2. Its function is as follows. Catalyzes the synthesis of alpha-ribazole-5'-phosphate from nicotinate mononucleotide (NAMN) and 5,6-dimethylbenzimidazole (DMB). The sequence is that of Nicotinate-nucleotide--dimethylbenzimidazole phosphoribosyltransferase from Bacteroides fragilis (strain ATCC 25285 / DSM 2151 / CCUG 4856 / JCM 11019 / LMG 10263 / NCTC 9343 / Onslow / VPI 2553 / EN-2).